Here is a 669-residue protein sequence, read N- to C-terminus: Myb-like protein M (669 aa).

The tract at residues 27-69 (DPSLMDDEFSDNEYDLSPKDDVPSPSKRGRGQIQNGIRRSPNK) is disordered. The span at 30–40 (LMDDEFSDNEY) shows a compositional bias: acidic residues. HTH myb-type domains follow at residues 60-118 (QNGI…SPDI) and 119-170 (RKGP…SREV). DNA-binding regions (H-T-H motif) lie at residues 90–114 (WKRI…KRVL) and 142–166 (WKKI…KSLQ). A Myb-like domain is found at 172–223 (WVPKEDEVLVKKVDEMGENLSWLEVSEYLAKLKHTNTLRTALECKTRYLQLT). Disordered regions lie at residues 226-530 (GGSI…EDNG) and 550-636 (IKNK…PHQS). Low complexity-rich tracts occupy residues 234 to 382 (NQSN…SSPS), 389 to 415 (NNNN…NSNN), and 450 to 464 (PTSL…SSPS). A compositionally biased stretch (polar residues) spans 465 to 482 (CNNSIRQPSPSPSIKTFK). Low complexity-rich tracts occupy residues 483–521 (STIV…NNDN), 555–593 (NNNN…NSDN), and 611–636 (SNFK…PHQS).

The protein resides in the nucleus. The protein is Myb-like protein M (mybM) of Dictyostelium discoideum (Social amoeba).